An 88-amino-acid polypeptide reads, in one-letter code: Putative sulfur carrier protein AF_0554 (88 aa).

Cys-26 acts as the Cysteine persulfide intermediate in catalysis.

It belongs to the sulfur carrier protein TusA family.

The sequence is that of Putative sulfur carrier protein AF_0554 from Archaeoglobus fulgidus (strain ATCC 49558 / DSM 4304 / JCM 9628 / NBRC 100126 / VC-16).